We begin with the raw amino-acid sequence, 506 residues long: MARDFKLIFSISILLLLLDCCYGGKVGVCYGRSADDLPTPSKVVQLIQQHNIKYVRIYDYNSQVLKAFGNTSIELMIGVPNSDLNAFSQSQSNVDTWLKNSVLPYYPTTKITYITVGAESTDDPHINASSFVVPAMQNVLTALRKVGLSRRIKVSTTLSLGILSRSFPPSAGAFNSSYAYFLRPMLEFLAENKSPFMIDLYPYYAYRDSPNNVSLDYVLFESSSEVIDPNTGLLYKNMFDAQVDALYYALTALNFRTIKIMVTETGWPTKGSPKEKAAASSDNAETYNSNIIRHVVTNQGTPAKPGEAMNVYIFSLFNENRKAGLDSERNWGLFYPDQTSVYQLDFTGKSNGFHSNSSGTNSSGSSNSWCIASSKASERDLKGALDWACGPGNVDCTAIQPSQPCFQPDTLVSHASFVFNSYFQQNRATDVACSFGGAGVKVNKDPSYDKCIYITAGGNKTKATNATALTSSASTPRGNELLQWILKLCLMISLFFSLQTMNSQAL.

The N-terminal stretch at 1–22 is a signal peptide; the sequence is MARDFKLIFSISILLLLLDCCY. A glycan (N-linked (GlcNAc...) asparagine) is linked at Asn70. The active-site Proton donor is the Glu119. N-linked (GlcNAc...) asparagine glycans are attached at residues Asn127, Asn175, and Asn212. The active-site Nucleophile is Glu264. 2 N-linked (GlcNAc...) asparagine glycosylation sites follow: Asn356 and Asn361. Cys370 and Cys433 are joined by a disulfide. N-linked (GlcNAc...) asparagine glycans are attached at residues Asn459 and Asn465. Ser471 carries the GPI-anchor amidated serine lipid modification. The propeptide at 472–506 is removed in mature form; the sequence is SASTPRGNELLQWILKLCLMISLFFSLQTMNSQAL.

Belongs to the glycosyl hydrolase 17 family. In terms of processing, contains two additional disulfide bonds.

It is found in the secreted. The protein resides in the cell wall. Its subcellular location is the cell membrane. The catalysed reaction is Hydrolysis of (1-&gt;3)-beta-D-glucosidic linkages in (1-&gt;3)-beta-D-glucans.. This is Glucan endo-1,3-beta-glucosidase 13 from Arabidopsis thaliana (Mouse-ear cress).